The primary structure comprises 658 residues: UvrABC system protein B (658 aa).

The Helicase ATP-binding domain maps to 25 to 178; that stretch reads KSLKNNNHYQ…KNFLLKLVEM (154 aa). An ATP-binding site is contributed by 38-45; sequence GVTGSGKT. Positions 91-114 match the Beta-hairpin motif; the sequence is HFDYYQPESYIPRRDLFIEKDSSI. The region spanning 433-607 is the Helicase C-terminal domain; it reads QVQDLFDEIK…ELKLRDDEIR (175 aa). A UVR domain is found at 623-658; that stretch reads EKIIKELDKKMRECAKNLDFEEAMRLRDEIAKLRTL.

This sequence belongs to the UvrB family. Forms a heterotetramer with UvrA during the search for lesions. Interacts with UvrC in an incision complex.

It localises to the cytoplasm. Its function is as follows. The UvrABC repair system catalyzes the recognition and processing of DNA lesions. A damage recognition complex composed of 2 UvrA and 2 UvrB subunits scans DNA for abnormalities. Upon binding of the UvrA(2)B(2) complex to a putative damaged site, the DNA wraps around one UvrB monomer. DNA wrap is dependent on ATP binding by UvrB and probably causes local melting of the DNA helix, facilitating insertion of UvrB beta-hairpin between the DNA strands. Then UvrB probes one DNA strand for the presence of a lesion. If a lesion is found the UvrA subunits dissociate and the UvrB-DNA preincision complex is formed. This complex is subsequently bound by UvrC and the second UvrB is released. If no lesion is found, the DNA wraps around the other UvrB subunit that will check the other stand for damage. The sequence is that of UvrABC system protein B from Helicobacter pylori (strain HPAG1).